A 209-amino-acid chain; its full sequence is D-aminoacyl-tRNA deacylase 1 (209 aa).

A Gly-cisPro motif, important for rejection of L-amino acids motif is present at residues 139–140 (GP). The interval 142-209 (TIELESPAPG…EGDVSSEREP (68 aa)) is disordered. Composition is skewed to basic and acidic residues over residues 159–170 (QLSKLEKQQQRK) and 181–194 (SSKE…EDRS). Phosphoserine is present on residues Ser197, Ser204, and Ser205.

It belongs to the DTD family. Homodimer. Interacts with CDC45 and TOPBP1. Preferentially phosphorylated in cells arrested early in S phase. Phosphorylation in the C-terminus weakens the interaction with CDC45.

The protein resides in the nucleus. It localises to the cytoplasm. The enzyme catalyses glycyl-tRNA(Ala) + H2O = tRNA(Ala) + glycine + H(+). The catalysed reaction is a D-aminoacyl-tRNA + H2O = a tRNA + a D-alpha-amino acid + H(+). An aminoacyl-tRNA editing enzyme that deacylates mischarged D-aminoacyl-tRNAs. Also deacylates mischarged glycyl-tRNA(Ala), protecting cells against glycine mischarging by AlaRS. Acts via tRNA-based rather than protein-based catalysis; rejects L-amino acids rather than detecting D-amino acids in the active site. By recycling D-aminoacyl-tRNA to D-amino acids and free tRNA molecules, this enzyme counteracts the toxicity associated with the formation of D-aminoacyl-tRNA entities in vivo and helps enforce protein L-homochirality. Functionally, ATPase involved in DNA replication, may facilitate loading of CDC45 onto pre-replication complexes. The polypeptide is D-aminoacyl-tRNA deacylase 1 (Dtd1) (Mus musculus (Mouse)).